The following is a 104-amino-acid chain: uncharacterized protein (104 aa).

The protein resides in the mitochondrion. This is an uncharacterized protein from Claviceps purpurea (Ergot fungus).